A 496-amino-acid chain; its full sequence is Probable cytosol aminopeptidase (496 aa).

2 residues coordinate Mn(2+): lysine 251 and aspartate 256. Residue lysine 263 is part of the active site. Residues aspartate 274, aspartate 333, and glutamate 335 each coordinate Mn(2+). Arginine 337 is an active-site residue.

This sequence belongs to the peptidase M17 family. It depends on Mn(2+) as a cofactor.

It is found in the cytoplasm. The catalysed reaction is Release of an N-terminal amino acid, Xaa-|-Yaa-, in which Xaa is preferably Leu, but may be other amino acids including Pro although not Arg or Lys, and Yaa may be Pro. Amino acid amides and methyl esters are also readily hydrolyzed, but rates on arylamides are exceedingly low.. The enzyme catalyses Release of an N-terminal amino acid, preferentially leucine, but not glutamic or aspartic acids.. Functionally, presumably involved in the processing and regular turnover of intracellular proteins. Catalyzes the removal of unsubstituted N-terminal amino acids from various peptides. This Acidovorax sp. (strain JS42) protein is Probable cytosol aminopeptidase.